We begin with the raw amino-acid sequence, 652 residues long: Zinc finger protein 432 (652 aa).

The KRAB domain occupies 8–79 (LTLEDVTVEF…EDERHSRICP (72 aa)). Position 41 is a 3'-nitrotyrosine (Tyr41). Ser139 and Ser164 each carry ADP-ribosylserine. 16 consecutive C2H2-type zinc fingers follow at residues 205–227 (HVCS…ERVH), 233–255 (YGCT…QRIH), 261–283 (FICS…QRTH), 289–311 (YICN…QRNH), 317–339 (YICS…QRTH), 345–367 (YICS…QRNH), 373–395 (YICN…QRTH), 401–423 (YICS…QRNH), 429–451 (YLCS…QRTH), 457–479 (YTCS…QRTH), 485–507 (YRCS…QRTH), 513–535 (YICN…QRTH), 541–563 (FMCS…QQIH), 567–591 (KSCI…KQVH), 597–619 (YGCN…QRTH), and 625–647 (FVCS…QRTH). Ser246 is subject to ADP-ribosylserine. Residue Ser330 is modified to ADP-ribosylserine. At Ser414 the chain carries ADP-ribosylserine.

This sequence belongs to the krueppel C2H2-type zinc-finger protein family. In terms of assembly, interacts with PARP1 and several chromatin remodeling proteins; the interaction with PARP1 reshapes ZNF432 interacting proteins. Interacts with TRIM28; the interaction is independent of PARP1.

The protein localises to the nucleus. Its function is as follows. Homologous recombination repressor that functions as a poly(ADP-ribose) (PAR) reader regulating DNA damage response and PARP inhibition. Once recruited to DNA lesions via DNA-, in a PAR-dependent mechanism, stimulates PARP1 activity. Binds preferentially ssDNA and inhibits EXO1-mediated resection, probably through a PAR-independent DNA-binding mechanism. The protein is Zinc finger protein 432 of Homo sapiens (Human).